The following is a 329-amino-acid chain: MARRYLFEFEKPLVELEQQIEQIRELARDSEVDVSQQLLQLETLAARRREEIFQALTPAEKIQVARHPHRPSTLDFIQMFCDDWVELHGDRRGSDDQALVGGVGRIGKRSVLLIGHQKGRDTKENVARNFGMATPGGYRKALRLMDHADRFRLPILTFIDTPGAYAGLLAEEQGQGEAIAVNLREMFRLRVPVIATVIGEGGSGGALGIGVADRLLMFEHSVYTVASPEACASILWRDAAKAPEAAAALKITGPDLLNLGVVDEVLPEPAGGNNWAPLQAGEVLREAIERHLDELLGLKVNQLREARYRKFRAMGRVLDPSSSETGLPA.

In terms of domain architecture, CoA carboxyltransferase C-terminal spans 40–294 (QLETLAARRR…REAIERHLDE (255 aa)).

Belongs to the AccA family. In terms of assembly, acetyl-CoA carboxylase is a heterohexamer composed of biotin carboxyl carrier protein (AccB), biotin carboxylase (AccC) and two subunits each of ACCase subunit alpha (AccA) and ACCase subunit beta (AccD).

Its subcellular location is the cytoplasm. It carries out the reaction N(6)-carboxybiotinyl-L-lysyl-[protein] + acetyl-CoA = N(6)-biotinyl-L-lysyl-[protein] + malonyl-CoA. It participates in lipid metabolism; malonyl-CoA biosynthesis; malonyl-CoA from acetyl-CoA: step 1/1. Functionally, component of the acetyl coenzyme A carboxylase (ACC) complex. First, biotin carboxylase catalyzes the carboxylation of biotin on its carrier protein (BCCP) and then the CO(2) group is transferred by the carboxyltransferase to acetyl-CoA to form malonyl-CoA. The protein is Acetyl-coenzyme A carboxylase carboxyl transferase subunit alpha of Prochlorococcus marinus (strain MIT 9313).